We begin with the raw amino-acid sequence, 403 residues long: Peroxisomal membrane protein PEX13 (403 aa).

Positions 1-11 (MASQPPPPPKP) are enriched in pro residues. A disordered region spans residues 1–68 (MASQPPPPPK…PSQQTGSSSV (68 aa)). Over 1-134 (MASQPPPPPK…SSRGAFQSIE (134 aa)) the chain is Peroxisomal matrix. Over residues 59–68 (PSQQTGSSSV) the composition is skewed to polar residues. A helical membrane pass occupies residues 135 to 155 (SIVHAFASVSMMMDATFSAVY). The interval 145 to 233 (MMMDATFSAV…EDRAATSAKS (89 aa)) is targeting to peroxisomes. Over 156-174 (NSFRAVLDVANHFSRLKIH) the chain is Cytoplasmic. A helical membrane pass occupies residues 175-192 (FTKVFSAFALVRTIRYLY). The tract at residues 175–196 (FTKVFSAFALVRTIRYLYRRLQ) is interaction with PEX19. The Peroxisomal matrix portion of the chain corresponds to 193–233 (RRLQRMLGLRRGSENEDLWAESEGTVACLGAEDRAATSAKS). Residues 234-254 (WPIFLFFAVILGGPYLIWKLL) traverse the membrane as a helical segment. The Cytoplasmic portion of the chain corresponds to 255 to 403 (STHSDEVTDS…IGKDGEKQDL (149 aa)). Residues 272–336 (DDHVVARAEY…PANYVKILGK (65 aa)) enclose the SH3 domain. Serine 354 carries the phosphoserine modification.

It belongs to the peroxin-13 family. As to quaternary structure, interacts (via SH3 domain) with PEX14 (via SH3-binding motif); forming the PEX13-PEX14 docking complex. Interacts with PEX19.

Its subcellular location is the peroxisome membrane. In terms of biological role, component of the PEX13-PEX14 docking complex, a translocon channel that specifically mediates the import of peroxisomal cargo proteins bound to PEX5 receptor. The PEX13-PEX14 docking complex forms a large import pore which can be opened to a diameter of about 9 nm. Mechanistically, PEX5 receptor along with cargo proteins associates with the PEX14 subunit of the PEX13-PEX14 docking complex in the cytosol, leading to the insertion of the receptor into the organelle membrane with the concomitant translocation of the cargo into the peroxisome matrix. Involved in the import of PTS1- and PTS2-type containing proteins. This chain is Peroxisomal membrane protein PEX13, found in Homo sapiens (Human).